Reading from the N-terminus, the 474-residue chain is MRSHQAGRKLPLLQLLGCVAVFSVFVFTIQSSFFADNNRKLDLQPEDIQILSDFQSSVQQCVANRGLGLSAHIIDHCNLILKFPEGTNSTWYNAQFKVFEALEFKYNVCEAVLLWEQYRNMTTVLTREYLDVRPDGWLDYAAMRIAQLGADKCYNRTLCEEHLNVILPAKPPFHPRQFHKCAVVGNSGDLLKTEFGEEIDSHDAVFRDNEAPVNEKYAKYVGVKRDFRLVVRGAARNMIKILNGSDNEVLIIKSVTHRDFNEMIKRIPNPVYLFQGIVLRRGAKGTGMKSIELALSMCDIVDIYGFTVDPGYTEWTRYFSTPRKGHNPLQGRAYYQLLECLGVIRIHSPMRSERKEDWSSVPSREMISRAHTAALRLQRSQQPTSSKRDGSGQFGNCKVWGDADPTKGPVSGSPDMSETRKKSNYKKWEVMPFRSLRKEARDHYIQMKGVSQYKMDGNKLDDLVCVRHPLKLDT.

The Cytoplasmic portion of the chain corresponds to 1–14; sequence MRSHQAGRKLPLLQ. Residues 15–35 traverse the membrane as a helical; Signal-anchor for type II membrane protein segment; that stretch reads LLGCVAVFSVFVFTIQSSFFA. Residues 36–474 are Lumenal-facing; it reads DNNRKLDLQP…CVRHPLKLDT (439 aa). 4 N-linked (GlcNAc...) asparagine glycosylation sites follow: Asn88, Asn120, Asn155, and Asn243. The disordered stretch occupies residues 376–421; that stretch reads RLQRSQQPTSSKRDGSGQFGNCKVWGDADPTKGPVSGSPDMSETRK.

The protein belongs to the glycosyltransferase 29 family. In terms of tissue distribution, highly expressed in inflorescences and siliques and at lower levels in roots, leaves and stems.

The protein localises to the golgi apparatus membrane. Its function is as follows. Required for normal pollen grain germination and pollen tube growth. May not be required for pollen development and female gametophytic function. The protein is Sialyltransferase-like protein 1 of Arabidopsis thaliana (Mouse-ear cress).